Consider the following 432-residue polypeptide: GTPase HflX (432 aa).

The 166-residue stretch at 202 to 367 folds into the Hflx-type G domain; that stretch reads FTVALVGYTN…ELRRAVGRAM (166 aa). Residues 208 to 215, 233 to 237, 255 to 258, 321 to 324, and 345 to 347 contribute to the GTP site; these read GYTNAGKS, FATLD, DTVG, NKID, and SAQ. Residues S215 and T235 each coordinate Mg(2+).

This sequence belongs to the TRAFAC class OBG-HflX-like GTPase superfamily. HflX GTPase family. In terms of assembly, monomer. Associates with the 50S ribosomal subunit. The cofactor is Mg(2+).

The protein localises to the cytoplasm. In terms of biological role, GTPase that associates with the 50S ribosomal subunit and may have a role during protein synthesis or ribosome biogenesis. The protein is GTPase HflX of Magnetococcus marinus (strain ATCC BAA-1437 / JCM 17883 / MC-1).